A 213-amino-acid chain; its full sequence is N-(5'-phosphoribosyl)anthranilate isomerase (213 aa).

Belongs to the TrpF family.

The catalysed reaction is N-(5-phospho-beta-D-ribosyl)anthranilate = 1-(2-carboxyphenylamino)-1-deoxy-D-ribulose 5-phosphate. Its pathway is amino-acid biosynthesis; L-tryptophan biosynthesis; L-tryptophan from chorismate: step 3/5. The protein is N-(5'-phosphoribosyl)anthranilate isomerase of Roseiflexus sp. (strain RS-1).